The primary structure comprises 331 residues: NADH-quinone oxidoreductase subunit H (331 aa).

9 consecutive transmembrane segments (helical) span residues 5 to 25 (LFFV…MASL), 45 to 65 (GPDM…IKLF), 78 to 98 (FIFL…LAPV), 122 to 142 (VLYI…AGLA), 156 to 176 (VVAL…VVMV), 192 to 212 (IFNW…MASF), 245 to 265 (FFIG…LLFL), 271 to 291 (FLFI…FFFF), and 311 to 331 (WKIL…ALLI).

This sequence belongs to the complex I subunit 1 family. As to quaternary structure, NDH-1 is composed of 14 different subunits. Subunits NuoA, H, J, K, L, M, N constitute the membrane sector of the complex.

The protein resides in the cell inner membrane. It carries out the reaction a quinone + NADH + 5 H(+)(in) = a quinol + NAD(+) + 4 H(+)(out). In terms of biological role, NDH-1 shuttles electrons from NADH, via FMN and iron-sulfur (Fe-S) centers, to quinones in the respiratory chain. The immediate electron acceptor for the enzyme in this species is believed to be ubiquinone. Couples the redox reaction to proton translocation (for every two electrons transferred, four hydrogen ions are translocated across the cytoplasmic membrane), and thus conserves the redox energy in a proton gradient. This subunit may bind ubiquinone. This chain is NADH-quinone oxidoreductase subunit H, found in Campylobacter concisus (strain 13826).